Reading from the N-terminus, the 357-residue chain is DNA replication and repair protein RecF (357 aa).

30–37 (GANGSGKT) is an ATP binding site.

It belongs to the RecF family.

The protein resides in the cytoplasm. Its function is as follows. The RecF protein is involved in DNA metabolism; it is required for DNA replication and normal SOS inducibility. RecF binds preferentially to single-stranded, linear DNA. It also seems to bind ATP. The chain is DNA replication and repair protein RecF from Enterobacter sp. (strain 638).